The following is a 476-amino-acid chain: Aspartyl/glutamyl-tRNA(Asn/Gln) amidotransferase subunit B 1 (476 aa).

Belongs to the GatB/GatE family. GatB subfamily. In terms of assembly, heterotrimer of A, B and C subunits.

It catalyses the reaction L-glutamyl-tRNA(Gln) + L-glutamine + ATP + H2O = L-glutaminyl-tRNA(Gln) + L-glutamate + ADP + phosphate + H(+). It carries out the reaction L-aspartyl-tRNA(Asn) + L-glutamine + ATP + H2O = L-asparaginyl-tRNA(Asn) + L-glutamate + ADP + phosphate + 2 H(+). In terms of biological role, allows the formation of correctly charged Asn-tRNA(Asn) or Gln-tRNA(Gln) through the transamidation of misacylated Asp-tRNA(Asn) or Glu-tRNA(Gln) in organisms which lack either or both of asparaginyl-tRNA or glutaminyl-tRNA synthetases. The reaction takes place in the presence of glutamine and ATP through an activated phospho-Asp-tRNA(Asn) or phospho-Glu-tRNA(Gln). This Clostridium acetobutylicum (strain ATCC 824 / DSM 792 / JCM 1419 / IAM 19013 / LMG 5710 / NBRC 13948 / NRRL B-527 / VKM B-1787 / 2291 / W) protein is Aspartyl/glutamyl-tRNA(Asn/Gln) amidotransferase subunit B 1 (gatB1).